The primary structure comprises 947 residues: Protein translocase subunit SecA 1 (947 aa).

ATP contacts are provided by residues Q83, 101 to 105 (GEGKT), and D490. The interval 860–947 (AKAQEQTGQG…KTSKPTRRRG (88 aa)) is disordered. Residues 925 to 934 (TRRERREAAR) are compositionally biased toward basic and acidic residues. Residues 935 to 947 (KQAKTSKPTRRRG) are compositionally biased toward basic residues.

This sequence belongs to the SecA family. As to quaternary structure, monomer and homodimer. Part of the essential Sec protein translocation apparatus which comprises SecA, SecYEG and auxiliary proteins SecDF. Other proteins may also be involved.

It localises to the cell membrane. The protein localises to the cytoplasm. It catalyses the reaction ATP + H2O + cellular proteinSide 1 = ADP + phosphate + cellular proteinSide 2.. In terms of biological role, part of the Sec protein translocase complex. Interacts with the SecYEG preprotein conducting channel. Has a central role in coupling the hydrolysis of ATP to the transfer of proteins into and across the cell membrane, serving as an ATP-driven molecular motor driving the stepwise translocation of polypeptide chains across the membrane. The sequence is that of Protein translocase subunit SecA 1 from Mycobacterium sp. (strain KMS).